The following is a 217-amino-acid chain: Small ribosomal subunit protein uS3c (217 aa).

The KH type-2 domain occupies 47–118 (IQKHVKSVSN…NLRVTLTGVI (72 aa)).

This sequence belongs to the universal ribosomal protein uS3 family. In terms of assembly, part of the 30S ribosomal subunit.

It is found in the plastid. Its subcellular location is the chloroplast. The protein is Small ribosomal subunit protein uS3c (rps3) of Adiantum capillus-veneris (Maidenhair fern).